Consider the following 172-residue polypeptide: Adenine phosphoribosyltransferase (172 aa).

Belongs to the purine/pyrimidine phosphoribosyltransferase family. As to quaternary structure, homodimer.

The protein resides in the cytoplasm. It catalyses the reaction AMP + diphosphate = 5-phospho-alpha-D-ribose 1-diphosphate + adenine. The protein operates within purine metabolism; AMP biosynthesis via salvage pathway; AMP from adenine: step 1/1. Functionally, catalyzes a salvage reaction resulting in the formation of AMP, that is energically less costly than de novo synthesis. The chain is Adenine phosphoribosyltransferase from Exiguobacterium sp. (strain ATCC BAA-1283 / AT1b).